The following is a 250-amino-acid chain: V-type proton ATPase subunit D (250 aa).

Belongs to the V-ATPase D subunit family. As to quaternary structure, V-ATPase is a heteromultimeric enzyme made up of two complexes: the ATP-hydrolytic V1 complex and the proton translocation V0 complex. The V1 complex consists of three catalytic AB heterodimers that form a heterohexamer, three peripheral stalks each consisting of EG heterodimers, one central rotor including subunits D and F, and the regulatory subunits C and H. The proton translocation complex V0 consists of the proton transport subunit a, a ring of proteolipid subunits c9c'', rotary subunit d, subunits e and f, and two accessory subunits ATP6AP1/Ac45 and ATP6AP2/PRR.

Functionally, subunit of the V1 complex of vacuolar(H+)-ATPase (V-ATPase), a multisubunit enzyme composed of a peripheral complex (V1) that hydrolyzes ATP and a membrane integral complex (V0) that translocates protons. V-ATPase is responsible for acidifying and maintaining the pH of intracellular compartments and in some cell types, is targeted to the plasma membrane, where it is responsible for acidifying the extracellular environment. The protein is V-type proton ATPase subunit D (VATPD) of Suberites domuncula (Sponge).